Consider the following 77-residue polypeptide: MGSFSIWHWLIVLVIVMLVFGTKKLRNIGQDLGGAVKGFKDGMKDADAAADASTQQKISGGQTLEGEAREKVEKTHS.

A helical membrane pass occupies residues 1-21; the sequence is MGSFSIWHWLIVLVIVMLVFG. Residues 50–77 form a disordered region; sequence ADASTQQKISGGQTLEGEAREKVEKTHS. Residues 53–62 show a composition bias toward polar residues; it reads STQQKISGGQ. Over residues 66 to 77 the composition is skewed to basic and acidic residues; sequence GEAREKVEKTHS.

Belongs to the TatA/E family. As to quaternary structure, the Tat system comprises two distinct complexes: a TatABC complex, containing multiple copies of TatA, TatB and TatC subunits, and a separate TatA complex, containing only TatA subunits. Substrates initially bind to the TatABC complex, which probably triggers association of the separate TatA complex to form the active translocon.

It is found in the cell inner membrane. Functionally, part of the twin-arginine translocation (Tat) system that transports large folded proteins containing a characteristic twin-arginine motif in their signal peptide across membranes. TatA could form the protein-conducting channel of the Tat system. In Azoarcus sp. (strain BH72), this protein is Sec-independent protein translocase protein TatA.